The primary structure comprises 172 residues: Signal peptidase complex catalytic subunit SEC11 (172 aa).

The Cytoplasmic portion of the chain corresponds to 1 to 14; that stretch reads MLSSLGNPRQAATQ. Residues 15–35 traverse the membrane as a helical; Signal-anchor for type II membrane protein segment; the sequence is LLNFALILSTAFMMWKGLSVA. The Lumenal segment spans residues 36 to 172; the sequence is TDSPSPIVVV…MGLMVVLQRE (137 aa). Active-site charge relay system residues include serine 49, histidine 90, and aspartate 115. A C-terminal short (CTS) helix region spans residues 158 to 169; it reads AMLGIMGLMVVL.

The protein belongs to the peptidase S26B family. In terms of assembly, component of the signal peptidase complex (SPC) composed of a catalytic subunit SEC11 and three accessory subunits SPC1, SPC2 and SPC3. The complex induces a local thinning of the ER membrane which is used to measure the length of the signal peptide (SP) h-region of protein substrates. This ensures the selectivity of the complex towards h-regions shorter than 18-20 amino acids. SPC associates with the translocon complex.

The protein localises to the endoplasmic reticulum membrane. It carries out the reaction Cleavage of hydrophobic, N-terminal signal or leader sequences from secreted and periplasmic proteins.. In terms of biological role, catalytic component of the signal peptidase complex (SPC) which catalyzes the cleavage of N-terminal signal sequences from nascent proteins as they are translocated into the lumen of the endoplasmic reticulum. Specifically cleaves N-terminal signal peptides that contain a hydrophobic alpha-helix (h-region) shorter than 18-20 amino acids. The protein is Signal peptidase complex catalytic subunit SEC11 (SEC11) of Pyricularia oryzae (strain 70-15 / ATCC MYA-4617 / FGSC 8958) (Rice blast fungus).